Here is a 695-residue protein sequence, read N- to C-terminus: Calcium-binding acidic-repeat protein (695 aa).

The or 23 signal peptide spans 1-20; sequence MSHLWCWLFLVLCLACLVLS. TSP type-3 repeat units follow at residues 24–38, 47–56, 70–82, 184–196, 202–214, and 248–260; these read KDSDGDGLLDVDEIN, ADSDQDGLTD, KDTDDDSIGDGVE, GDSDDDGVSDGAE, KDSDGDGLTDEEE, and GDSDDDGLGDGAE. The segment at 45–695 is disordered; that stretch reads YNADSDQDGL…TDPWRSDHSV (651 aa). Residues 59–70 are compositionally biased toward basic and acidic residues; the sequence is EVNRHQTHPQDK. 3 stretches are compositionally biased toward acidic residues: residues 271–283, 291–306, and 313–324; these read ADSDNDGLDDGEE, PEDPDSDNDGLNDGDE, and DPEEDDSDEDGV. TSP type-3 repeat units lie at residues 294–308, 317–329, 340–352, 363–375, 379–393, 402–414, 425–437, 470–482, 493–505, 516–528, 539–551, 555–569, 600–609, 623–635, and 646–658; these read PDSDNDGLNDGDEVN, DDSDEDGVCDGAE, EDSDNDGIPDGAE, EDSDDDGIADGAE, TDSDGDGLPDEDEVA, ADSDYDGLTDGAE, KDTDDDGLGDGVE, EDTDDDGLTDGAE, ADTDDDGLTDGAE, ADSDGDGLSDGAE, GDSDDDGVPDAAE, KDSDGDGLSDTDEVR, RDTDGDGVAD, and ADSDDDGLSDGAE. 2 stretches are compositionally biased toward acidic residues: residues 361–370 and 381–392; these read NDEDSDDDGI and SDGDGLPDEDEV. Composition is skewed to acidic residues over residues 467-477 and 491-500; these read PNDEDTDDDGL and EDADTDDDGL. Acidic residues predominate over residues 537-546; sequence NDGDSDDDGV. The span at 589-603 shows a compositional bias: basic and acidic residues; that stretch reads EILKHKTDPRNRDTD. Residues 665–679 are compositionally biased toward basic and acidic residues; it reads NAKDGDSDDDGKADG.

Its subcellular location is the secreted. It localises to the endoplasmic reticulum. May function as a calcium-binding protein. The polypeptide is Calcium-binding acidic-repeat protein (Euglena gracilis).